The chain runs to 359 residues: 3-dehydroquinate synthase (359 aa).

NAD(+) is bound by residues 71–76, 105–109, 129–130, Lys-142, Lys-151, and 169–172; these read DGEQYK, GVIGD, TT, and CLAT. The Zn(2+) site is built by Glu-184, His-247, and His-264.

Belongs to the sugar phosphate cyclases superfamily. Dehydroquinate synthase family. The cofactor is Co(2+). Zn(2+) serves as cofactor. NAD(+) is required as a cofactor.

The protein resides in the cytoplasm. The catalysed reaction is 7-phospho-2-dehydro-3-deoxy-D-arabino-heptonate = 3-dehydroquinate + phosphate. It participates in metabolic intermediate biosynthesis; chorismate biosynthesis; chorismate from D-erythrose 4-phosphate and phosphoenolpyruvate: step 2/7. In terms of biological role, catalyzes the conversion of 3-deoxy-D-arabino-heptulosonate 7-phosphate (DAHP) to dehydroquinate (DHQ). This is 3-dehydroquinate synthase from Baumannia cicadellinicola subsp. Homalodisca coagulata.